A 355-amino-acid polypeptide reads, in one-letter code: Homeotic protein knotted-1 (355 aa).

The segment at 205-233 is disordered; it reads KCEGVGSSEEDQDNSGGETELPEIDPRAE. In terms of domain architecture, ELK spans 236–256; it reads ELKNHLLRKYSGYLSSLKQEL. A DNA-binding region (homeobox; TALE-type) is located at residues 257-320; the sequence is SKKKKKGKLP…NQRKRHWKPS (64 aa).

It belongs to the TALE/KNOX homeobox family. As to expression, expressed in the apical meristems, in the newly emerged lateral primordia in the floral bud, in their vascular bundles and in the cortex parenchyma of the floral pedicle. Also present in the lateral tips of leaf primordia.

It is found in the nucleus. Its function is as follows. Appears to be involved in meristem formation and in the regulation of leaf morphology. Misexpression makes the leaf more compound which is always associated with growth retardation and loss of apical dominance, resulting in dwarfed, bushy plants. Probably binds to the DNA sequence 5'-TGAC-3'. The sequence is that of Homeotic protein knotted-1 (KN1) from Solanum lycopersicum (Tomato).